A 159-amino-acid chain; its full sequence is SsrA-binding protein (159 aa).

This sequence belongs to the SmpB family.

It is found in the cytoplasm. Functionally, required for rescue of stalled ribosomes mediated by trans-translation. Binds to transfer-messenger RNA (tmRNA), required for stable association of tmRNA with ribosomes. tmRNA and SmpB together mimic tRNA shape, replacing the anticodon stem-loop with SmpB. tmRNA is encoded by the ssrA gene; the 2 termini fold to resemble tRNA(Ala) and it encodes a 'tag peptide', a short internal open reading frame. During trans-translation Ala-aminoacylated tmRNA acts like a tRNA, entering the A-site of stalled ribosomes, displacing the stalled mRNA. The ribosome then switches to translate the ORF on the tmRNA; the nascent peptide is terminated with the 'tag peptide' encoded by the tmRNA and targeted for degradation. The ribosome is freed to recommence translation, which seems to be the essential function of trans-translation. The sequence is that of SsrA-binding protein from Mycobacteroides abscessus (strain ATCC 19977 / DSM 44196 / CCUG 20993 / CIP 104536 / JCM 13569 / NCTC 13031 / TMC 1543 / L948) (Mycobacterium abscessus).